Reading from the N-terminus, the 631-residue chain is NADPH oxidoreductase A (631 aa).

The Flavodoxin-like domain occupies 73–212 (ILILYGTEYG…CFDRYIDTVC (140 aa)). Residues 79–83 (TEYGL) and 160–191 (VLAL…KRFR) contribute to the FMN site. The 234-residue stretch at 247-480 (KKPYSSKLLV…INNNPDFRLP (234 aa)) folds into the FAD-binding FR-type domain. 249 to 299 (PYSSKLLVKRVLTKGDKVGIHLEFELGDSELKYVPGDALAILPDNAASEVS) contributes to the FAD binding site. Residue 504 to 630 (QERKALGHTG…KEKRYQKDVW (127 aa)) participates in NADP(+) binding.

FAD serves as cofactor. FMN is required as a cofactor.

In terms of biological role, probable NADPH oxidoreductase that controls development beyond the mound stage. This chain is NADPH oxidoreductase A (redA), found in Dictyostelium discoideum (Social amoeba).